The sequence spans 396 residues: Elongation factor Tu (396 aa).

A tr-type G domain is found at 10–206; sequence KPHVNVGTIG…ALDSYIPTPE (197 aa). The interval 19–26 is G1; that stretch reads GHVDHGKT. Residue 19-26 coordinates GTP; that stretch reads GHVDHGKT. Residue T26 coordinates Mg(2+). A G2 region spans residues 60-64; it reads GITIN. A G3 region spans residues 81 to 84; sequence DCPG. GTP contacts are provided by residues 81–85 and 136–139; these read DCPGH and NKCD. Residues 136 to 139 form a G4 region; that stretch reads NKCD. A G5 region spans residues 174-176; the sequence is SAL.

It belongs to the TRAFAC class translation factor GTPase superfamily. Classic translation factor GTPase family. EF-Tu/EF-1A subfamily. Monomer.

It is found in the cytoplasm. The enzyme catalyses GTP + H2O = GDP + phosphate + H(+). Its function is as follows. GTP hydrolase that promotes the GTP-dependent binding of aminoacyl-tRNA to the A-site of ribosomes during protein biosynthesis. The chain is Elongation factor Tu from Azoarcus sp. (strain BH72).